The primary structure comprises 461 residues: Fumarate hydratase class II (461 aa).

Substrate is bound by residues 97-99, 127-130, 137-139, and Thr-185; these read SGT, HPND, and SSN. His-186 (proton donor/acceptor) is an active-site residue. Ser-316 is an active-site residue. Residues Ser-317 and 322 to 324 contribute to the substrate site; that span reads KVN.

This sequence belongs to the class-II fumarase/aspartase family. Fumarase subfamily. As to quaternary structure, homotetramer.

Its subcellular location is the cytoplasm. It catalyses the reaction (S)-malate = fumarate + H2O. It functions in the pathway carbohydrate metabolism; tricarboxylic acid cycle; (S)-malate from fumarate: step 1/1. Functionally, involved in the TCA cycle. Catalyzes the stereospecific interconversion of fumarate to L-malate. This is Fumarate hydratase class II from Staphylococcus aureus (strain COL).